Reading from the N-terminus, the 193-residue chain is Acyl-homoserine-lactone synthase (193 aa).

This sequence belongs to the autoinducer synthase family.

It carries out the reaction a fatty acyl-[ACP] + S-adenosyl-L-methionine = an N-acyl-L-homoserine lactone + S-methyl-5'-thioadenosine + holo-[ACP] + H(+). Functionally, required for the synthesis of N-(3-oxodecanoyl)-L-homoserine lactone (ODHL), an autoinducer molecule which binds to VanR. This is Acyl-homoserine-lactone synthase (vanI) from Vibrio anguillarum (Listonella anguillarum).